Consider the following 151-residue polypeptide: Phosphopantetheine adenylyltransferase (151 aa).

Thr9 contacts substrate. ATP contacts are provided by residues 9-10 and His17; that span reads TF. Substrate is bound by residues Lys41, Thr73, and Arg87. Residues 88-90, Glu98, and 122-128 contribute to the ATP site; these read GIR and LTCVSST.

Belongs to the bacterial CoaD family. Homohexamer. Mg(2+) serves as cofactor.

The protein resides in the cytoplasm. It carries out the reaction (R)-4'-phosphopantetheine + ATP + H(+) = 3'-dephospho-CoA + diphosphate. It participates in cofactor biosynthesis; coenzyme A biosynthesis; CoA from (R)-pantothenate: step 4/5. Reversibly transfers an adenylyl group from ATP to 4'-phosphopantetheine, yielding dephospho-CoA (dPCoA) and pyrophosphate. The protein is Phosphopantetheine adenylyltransferase of Bacteroides thetaiotaomicron (strain ATCC 29148 / DSM 2079 / JCM 5827 / CCUG 10774 / NCTC 10582 / VPI-5482 / E50).